A 379-amino-acid polypeptide reads, in one-letter code: Probable G-protein coupled receptor 27 (379 aa).

The Extracellular segment spans residues 1-26 (MANASEPGGGGSGGGAEAAALGLRLA). Asparagine 3 carries N-linked (GlcNAc...) asparagine glycosylation. The chain crosses the membrane as a helical span at residues 27-47 (TLSLLLCVSLAGNVLFALLIV). Residues 48-58 (RERSLHRAPYY) lie on the Cytoplasmic side of the membrane. Residues 59–79 (LLLDLCLADGLRALACLPAVM) form a helical membrane-spanning segment. Topologically, residues 80-100 (LAARRAAAAAGTPPGALGCKL) are extracellular. Residues cysteine 98 and cysteine 175 are joined by a disulfide bond. A helical transmembrane segment spans residues 101-121 (LAFLAALFCFHAAFLLLGVGV). The Cytoplasmic segment spans residues 122-142 (TRYLAIAHHRFYAERLAGWPC). The helical transmembrane segment at 143-163 (AAMLVCAAWALALAAAFPPVL) threads the bilayer. At 164–185 (DGGGADDEDAPCALEQRPDGAP) the chain is on the extracellular side. A helical membrane pass occupies residues 186 to 206 (GALGFLLLLAAVVGATHLVYL). The Cytoplasmic segment spans residues 207–289 (RLLFFIHDRR…FKTEKRLCKM (83 aa)). A helical transmembrane segment spans residues 290–310 (FYAITLLFLLLWGPYVVASYL). Residues 311 to 324 (RVLVRPGAVPQAYL) lie on the Extracellular side of the membrane. A helical transmembrane segment spans residues 325–345 (TASVWLTFAQAGINPVVCFLF). The Cytoplasmic segment spans residues 346-379 (NRELRDCFRAQFPCCQSPQATQATLPCDLKGIGL).

This sequence belongs to the G-protein coupled receptor 1 family.

The protein resides in the cell membrane. Orphan receptor. Possible candidate for amine-like G-protein coupled receptor. This chain is Probable G-protein coupled receptor 27 (Gpr27), found in Mus musculus (Mouse).